The following is a 448-amino-acid chain: N-succinylarginine dihydrolase (448 aa).

Residues 20 to 29 (AGLLFGNEAS), N111, and 138 to 139 (HR) contribute to the substrate site. E175 is a catalytic residue. R213 is a substrate binding site. H249 is a catalytic residue. Substrate contacts are provided by D251 and N360. Catalysis depends on C366, which acts as the Nucleophile.

It belongs to the succinylarginine dihydrolase family. In terms of assembly, homodimer.

It catalyses the reaction N(2)-succinyl-L-arginine + 2 H2O + 2 H(+) = N(2)-succinyl-L-ornithine + 2 NH4(+) + CO2. It participates in amino-acid degradation; L-arginine degradation via AST pathway; L-glutamate and succinate from L-arginine: step 2/5. In terms of biological role, catalyzes the hydrolysis of N(2)-succinylarginine into N(2)-succinylornithine, ammonia and CO(2). In Shigella dysenteriae serotype 1 (strain Sd197), this protein is N-succinylarginine dihydrolase.